A 312-amino-acid polypeptide reads, in one-letter code: Aspartate carbamoyltransferase catalytic subunit (312 aa).

Positions 62 and 63 each coordinate carbamoyl phosphate. Lys-90 is an L-aspartate binding site. Positions 112, 140, and 143 each coordinate carbamoyl phosphate. Arg-173 and Arg-228 together coordinate L-aspartate. Carbamoyl phosphate is bound by residues Gly-269 and Pro-270.

The protein belongs to the aspartate/ornithine carbamoyltransferase superfamily. ATCase family. As to quaternary structure, heterododecamer (2C3:3R2) of six catalytic PyrB chains organized as two trimers (C3), and six regulatory PyrI chains organized as three dimers (R2).

The catalysed reaction is carbamoyl phosphate + L-aspartate = N-carbamoyl-L-aspartate + phosphate + H(+). The protein operates within pyrimidine metabolism; UMP biosynthesis via de novo pathway; (S)-dihydroorotate from bicarbonate: step 2/3. Catalyzes the condensation of carbamoyl phosphate and aspartate to form carbamoyl aspartate and inorganic phosphate, the committed step in the de novo pyrimidine nucleotide biosynthesis pathway. The polypeptide is Aspartate carbamoyltransferase catalytic subunit (Deinococcus geothermalis (strain DSM 11300 / CIP 105573 / AG-3a)).